The sequence spans 101 residues: NADH-quinone oxidoreductase subunit K (101 aa).

Helical transmembrane passes span 4–24 (LSHYLVLGAILFAISVVGIFL), 30–50 (IVLLMAIELMLLAVNLNFIAF), and 61–81 (IFVFFILTVAAAESAIGLAIL).

The protein belongs to the complex I subunit 4L family. In terms of assembly, NDH-1 is composed of 14 different subunits. Subunits NuoA, H, J, K, L, M, N constitute the membrane sector of the complex.

The protein localises to the cell inner membrane. It carries out the reaction a quinone + NADH + 5 H(+)(in) = a quinol + NAD(+) + 4 H(+)(out). NDH-1 shuttles electrons from NADH, via FMN and iron-sulfur (Fe-S) centers, to quinones in the respiratory chain. The immediate electron acceptor for the enzyme in this species is believed to be ubiquinone. Couples the redox reaction to proton translocation (for every two electrons transferred, four hydrogen ions are translocated across the cytoplasmic membrane), and thus conserves the redox energy in a proton gradient. This is NADH-quinone oxidoreductase subunit K from Aromatoleum aromaticum (strain DSM 19018 / LMG 30748 / EbN1) (Azoarcus sp. (strain EbN1)).